The sequence spans 56 residues: Large ribosomal subunit protein bL33c (56 aa).

The protein belongs to the bacterial ribosomal protein bL33 family.

Its subcellular location is the plastid. The protein localises to the chloroplast. This Rhodomonas salina (Cryptomonas salina) protein is Large ribosomal subunit protein bL33c.